The primary structure comprises 896 residues: Cytokine receptor common subunit beta (896 aa).

The first 22 residues, 1-22 (MDQQMALTWGLCYMALVALCWG), serve as a signal peptide directing secretion. Residues 23–441 (HGVTEAEETV…SEEYTWKTDW (419 aa)) lie on the Extracellular side of the membrane. Cysteines 39 and 49 form a disulfide. N-linked (GlcNAc...) asparagine glycosylation is present at Asn62. Disulfide bonds link Cys77/Cys99 and Cys88/Cys94. A Fibronectin type-III 1 domain is found at 136–243 (PPLPKNVSIS…PEVHWDSQPG (108 aa)). The N-linked (GlcNAc...) asparagine glycan is linked to Asn141. Residues 220–233 (SPGSSLSGRPSRWS) are compositionally biased toward low complexity. Residues 220 to 243 (SPGSSLSGRPSRWSPEVHWDSQPG) are disordered. 2 cysteine pairs are disulfide-bonded: Cys253–Cys263 and Cys292–Cys310. Residues 343–439 (QMEPPTLNLT…KWSEEYTWKT (97 aa)) form the Fibronectin type-III 2 domain. N-linked (GlcNAc...) asparagine glycosylation is present at Asn350. Positions 428–432 (WSKWS) match the WSXWS motif motif. The helical transmembrane segment at 442 to 463 (VMPTLWIVLILVFLILTLLLIL) threads the bilayer. The Cytoplasmic portion of the chain corresponds to 464–896 (RFGCVSVYRT…WDNSQSGKVC (433 aa)). The Box 1 motif signature appears at 477–485 (WKEKIPNPS). 2 disordered regions span residues 543–620 (EDPN…GGSL) and 658–725 (CGSS…TGPL). Polar residues-rich tracts occupy residues 555–571 (PDTT…QLPN) and 658–668 (CGSSLETSGSP). Low complexity predominate over residues 716-725 (PVLTLPTGPL). Phosphoserine occurs at positions 752 and 754. Tyr765 carries the phosphotyrosine modification. The tract at residues 771-810 (SVSQAAKSPPGHPAPPVASSPTVIPGEPREEVGPASPHPE) is disordered.

It belongs to the type I cytokine receptor family. Type 4 subfamily. As to quaternary structure, heterodimer of an alpha and a beta subunit. The beta subunit is common to the IL3, IL5 and GM-CSF receptors. The signaling GM-CSF receptor complex is a dodecamer of two head-to-head hexamers of two alpha, two beta, and two ligand subunits. Interacts with TMEM102; this interaction occurs preferentially in the absence of CSF2. Interacts with FCER1G; this interaction is direct. Interacts with LYN. Post-translationally, may be phosphorylated by LYN.

Its subcellular location is the membrane. Functionally, high affinity receptor for interleukin-3, interleukin-5 and granulocyte-macrophage colony-stimulating factor. The chain is Cytokine receptor common subunit beta (Csf2rb) from Mus musculus (Mouse).